Consider the following 209-residue polypeptide: Probable septum site-determining protein MinC (209 aa).

Belongs to the MinC family. As to quaternary structure, interacts with MinD and FtsZ.

Functionally, cell division inhibitor that blocks the formation of polar Z ring septums. Rapidly oscillates between the poles of the cell to destabilize FtsZ filaments that have formed before they mature into polar Z rings. Prevents FtsZ polymerization. The polypeptide is Probable septum site-determining protein MinC (Clostridium kluyveri (strain NBRC 12016)).